Reading from the N-terminus, the 402-residue chain is Phosphoglycerate kinase (402 aa).

Residues 30 to 32 (DFN), arginine 46, 70 to 73 (HLGR), arginine 126, and arginine 159 contribute to the substrate site. Residues lysine 210, glutamate 332, and 358 to 361 (GGDT) each bind ATP.

The protein belongs to the phosphoglycerate kinase family. As to quaternary structure, monomer.

Its subcellular location is the cytoplasm. It carries out the reaction (2R)-3-phosphoglycerate + ATP = (2R)-3-phospho-glyceroyl phosphate + ADP. The protein operates within carbohydrate degradation; glycolysis; pyruvate from D-glyceraldehyde 3-phosphate: step 2/5. The sequence is that of Phosphoglycerate kinase from Helicobacter hepaticus (strain ATCC 51449 / 3B1).